Consider the following 430-residue polypeptide: Trigger factor (430 aa).

The PPIase FKBP-type domain occupies 157-242 (GDLVALETWS…AVEVSEPVLP (86 aa)).

The protein belongs to the FKBP-type PPIase family. Tig subfamily.

The protein localises to the cytoplasm. It catalyses the reaction [protein]-peptidylproline (omega=180) = [protein]-peptidylproline (omega=0). Functionally, involved in protein export. Acts as a chaperone by maintaining the newly synthesized protein in an open conformation. Functions as a peptidyl-prolyl cis-trans isomerase. This Xanthomonas axonopodis pv. citri (strain 306) protein is Trigger factor.